A 448-amino-acid chain; its full sequence is Phosphoglucosamine mutase (448 aa).

S100 acts as the Phosphoserine intermediate in catalysis. Mg(2+)-binding residues include S100, D240, D242, and D244. At S100 the chain carries Phosphoserine.

The protein belongs to the phosphohexose mutase family. Mg(2+) serves as cofactor. Activated by phosphorylation.

It catalyses the reaction alpha-D-glucosamine 1-phosphate = D-glucosamine 6-phosphate. Catalyzes the conversion of glucosamine-6-phosphate to glucosamine-1-phosphate. The polypeptide is Phosphoglucosamine mutase (Clostridioides difficile (strain 630) (Peptoclostridium difficile)).